A 30-amino-acid polypeptide reads, in one-letter code: Dermonecrotic toxin LlSicTox-alphaIII-1 (30 aa).

His-12 is a catalytic residue.

The protein belongs to the arthropod phospholipase D family. Class I subfamily. Mg(2+) is required as a cofactor. Contains 1 disulfide bond. In terms of tissue distribution, expressed by the venom gland.

Its subcellular location is the secreted. The catalysed reaction is an N-(acyl)-sphingosylphosphocholine = an N-(acyl)-sphingosyl-1,3-cyclic phosphate + choline. It catalyses the reaction an N-(acyl)-sphingosylphosphoethanolamine = an N-(acyl)-sphingosyl-1,3-cyclic phosphate + ethanolamine. It carries out the reaction a 1-acyl-sn-glycero-3-phosphocholine = a 1-acyl-sn-glycero-2,3-cyclic phosphate + choline. The enzyme catalyses a 1-acyl-sn-glycero-3-phosphoethanolamine = a 1-acyl-sn-glycero-2,3-cyclic phosphate + ethanolamine. Functionally, dermonecrotic toxins cleave the phosphodiester linkage between the phosphate and headgroup of certain phospholipids (sphingolipid and lysolipid substrates), forming an alcohol (often choline) and a cyclic phosphate. This toxin acts on sphingomyelin (SM). It may also act on ceramide phosphoethanolamine (CPE), lysophosphatidylcholine (LPC) and lysophosphatidylethanolamine (LPE), but not on lysophosphatidylserine (LPS), and lysophosphatidylglycerol (LPG). It acts by transphosphatidylation, releasing exclusively cyclic phosphate products as second products. In vivo, intradermal injection induces dermonecrosis. Induces hemolysis, increased vascular permeability, edema, inflammatory response, and platelet aggregation. The sequence is that of Dermonecrotic toxin LlSicTox-alphaIII-1 from Loxosceles laeta (South American recluse spider).